The primary structure comprises 163 residues: Transcription antitermination protein NusB (163 aa).

This sequence belongs to the NusB family.

Its function is as follows. Involved in transcription antitermination. Required for transcription of ribosomal RNA (rRNA) genes. Binds specifically to the boxA antiterminator sequence of the ribosomal RNA (rrn) operons. The protein is Transcription antitermination protein NusB of Chlorobium luteolum (strain DSM 273 / BCRC 81028 / 2530) (Pelodictyon luteolum).